Here is a 199-residue protein sequence, read N- to C-terminus: 5'-deoxynucleotidase YfbR (199 aa).

Residues 18–19 and H33 each bind substrate; that span reads RW. The region spanning 30–142 is the HD domain; sequence VSEHSLQVAM…VKQADALCAY (113 aa). Positions 33, 68, and 69 each coordinate a divalent metal cation. Residues D69, 77 to 80, and D137 contribute to the substrate site; that span reads DLPT. D137 contributes to the a divalent metal cation binding site.

Belongs to the 5DNU family. In terms of assembly, homodimer. A divalent metal cation is required as a cofactor.

Its subcellular location is the cytoplasm. The catalysed reaction is a 2'-deoxyribonucleoside 5'-phosphate + H2O = a 2'-deoxyribonucleoside + phosphate. Functionally, catalyzes the strictly specific dephosphorylation of 2'-deoxyribonucleoside 5'-monophosphates. This is 5'-deoxynucleotidase YfbR from Shigella flexneri serotype 5b (strain 8401).